The following is a 245-amino-acid chain: Probable phosphatase Ent638_1550 (245 aa).

Positions 7, 9, 15, 40, 73, 101, 131, 192, and 194 each coordinate Zn(2+).

Belongs to the PHP family. As to quaternary structure, homotrimer. Zn(2+) serves as cofactor.

This Enterobacter sp. (strain 638) protein is Probable phosphatase Ent638_1550.